We begin with the raw amino-acid sequence, 1129 residues long: MSRFDSQCSSEDVNKEDECVPSSSEDSQDGVSSPMENDDEPEFSQKHYDIEPCYYSLTGKSDRNCRGIVYRYRQDSDLKGFQSHDGTLYRLRDSVFVEVSQNEPYVIAAICGFKYTKRDHVVVKLTRYFRADDIPEISLNLMKQERAELEINPHLCPQSLNRELFNSELQITQPVSCLRGKCIVEYVKDVRHARTVADFSLDNDTFFFCLHYNQDSTKLASTHYAIRVGTSFQATLPPMAECSVGDDSDRDELLYRPNSIESGEEEDYIKLARCYRTYTLSGNHMLDSQKNARSLQVSDLLMDEAIIQLHRSGYKIDDALSELNANDIILTTDVDNMTQDDAKKFAKGIKQLGKNFSRIHRELLPHHSREQLVSYYYLWKKTPEATKPKQAARRVNPTSIKRPTKEKVKASRPTSTEYLDFDSASESDVENNGPSGRACHHCYGAESKDWHHANGLLLCTDCRLHYKKYGQLRQIANRPSQVPACLFKRSNSDEEESGVRTRAGKKEQRRRTPSSMSETPDRRSPSTVSNGAPNLTAEETPTKKLNGSVKRAPKRPLHNGVINNVEKSNSSEEPASPTTPPPTLTNGLTNGHGPESSTPNGETISKRMKVEPSYDDDDDEEEGKMTIDEGDDDPMPVLNGFKKEESVEEIKLELNGTIKKENGVETDPTTPTCSMEAENEVCETPAVVSVEIRDETNGETNSDLKDDENVEPDSPEDTFELGSNVEFETKNAMFVRSIVRSCGPRCARTDLIFKIKVGGVWEKSIKEKEERKKVHLQNQRIQDSEKVAIQQNQIKKEQQQSQPTPQQIHQQQAQQNAQHLQQLQQAVMLGHLPPEVLRQMMPPQFGVDPTAILMQQMMAGQQSQGVNAAFQHQMALQQQLEAHQVQFQLMMAHQHQQKMIAEQQQQQRHAAAQQLREREQREQRERERERQHQQQAQQALHQQQQQHAAAAANQLNPAMMQMMALMANSAASQQDIARLMEMAAQQQQQQQQAAQAQAQRDQERERREREAREREAAREREREQAAREAAARDQAAREHAQAVQAAAAAAQQAQALTPDMQHMHLLQQLMLNPALMMQLQQAQAQQQQQQPQVTNPLQMLQHGMAAQSANQAEMMRRIHPEPAMRPQHQ.

Polar residues predominate over residues 1-11; that stretch reads MSRFDSQCSSE. A disordered region spans residues 1–43; that stretch reads MSRFDSQCSSEDVNKEDECVPSSSEDSQDGVSSPMENDDEPEF. The segment covering 22–33 has biased composition (low complexity); sequence SSSEDSQDGVSS. The BAH domain maps to 87-223; the sequence is TLYRLRDSVF…QDSTKLASTH (137 aa). Positions 224–327 constitute an ELM2 domain; the sequence is YAIRVGTSFQ…DALSELNAND (104 aa). The SANT domain occupies 332–384; the sequence is TDVDNMTQDDAKKFAKGIKQLGKNFSRIHRELLPHHSREQLVSYYYLWKKTPE. Positions 388-434 are disordered; it reads PKQAARRVNPTSIKRPTKEKVKASRPTSTEYLDFDSASESDVENNGP. The span at 419–429 shows a compositional bias: acidic residues; it reads LDFDSASESDV. The GATA-type; atypical zinc finger occupies 439-485; it reads CHHCYGAESKDWHHANGLLLCTDCRLHYKKYGQLRQIANRPSQVPAC. 5 disordered regions span residues 488 to 636, 693 to 717, 790 to 814, 899 to 950, and 982 to 1040; these read KRSN…DPMP, RDET…SPED, QQNQ…QQAQ, MIAE…HAAA, and MAAQ…REHA. Polar residues-rich tracts occupy residues 525–545 and 561–573; these read PSTV…TKKL and VINN…SSEE. Composition is skewed to acidic residues over residues 613-634 and 705-717; these read SYDD…DDDP and KDDE…SPED. Positions 899-914 are enriched in low complexity; it reads MIAEQQQQQRHAAAQQ. The span at 915 to 932 shows a compositional bias: basic and acidic residues; sequence LREREQREQRERERERQH. Composition is skewed to low complexity over residues 933–950 and 983–999; these read QQQA…HAAA and AAQQ…AQAQ. Over residues 1000–1040 the composition is skewed to basic and acidic residues; it reads RDQERERREREAREREAAREREREQAAREAAARDQAAREHA.

As to quaternary structure, interacts with ceh-6, sem-4 and sox-2. Interacts with wdr-5.1. In terms of tissue distribution, expression detected in anterior intestine and head region.

Its subcellular location is the nucleus. In terms of biological role, transcription factor which promotes stress survival and delays aging. Required for cell cycle progression and development of the mesodermal and endodermal embryonic lineages. Required for normal T-cell polarity, for correct migration of QL neuroblast descendants and other cells, for embryonic patterning and for the embryonic expression of hlh-8. Also required for the transdifferentiation of the Y rectal epithelial cell to the PDA motor neuron during larval development. The chain is Egg-laying defective protein 27 from Caenorhabditis elegans.